The chain runs to 69 residues: Probable cold shock protein y4cH (69 aa).

In terms of domain architecture, CSD spans 5-65 (GTVKWFNATK…DRKSGKMSAD (61 aa)).

The protein localises to the cytoplasm. This Sinorhizobium fredii (strain NBRC 101917 / NGR234) protein is Probable cold shock protein y4cH.